Here is a 340-residue protein sequence, read N- to C-terminus: Ketol-acid reductoisomerase (NADP(+)) (340 aa).

In terms of domain architecture, KARI N-terminal Rossmann spans 1–183 (MAITVYYDKD…GGGRTGIIET (183 aa)). Residues 26–29 (FGSQ), Arg49, Ser52, Ser54, and 84–87 (DEIQ) contribute to the NADP(+) site. His109 is a catalytic residue. Residue Gly135 coordinates NADP(+). Residues 184-329 (TFKAETETDL…RNLRAMMPWI (146 aa)) enclose the KARI C-terminal knotted domain. Mg(2+)-binding residues include Asp192, Glu196, Glu228, and Glu232. Ser253 contacts substrate.

It belongs to the ketol-acid reductoisomerase family. It depends on Mg(2+) as a cofactor.

It catalyses the reaction (2R)-2,3-dihydroxy-3-methylbutanoate + NADP(+) = (2S)-2-acetolactate + NADPH + H(+). The catalysed reaction is (2R,3R)-2,3-dihydroxy-3-methylpentanoate + NADP(+) = (S)-2-ethyl-2-hydroxy-3-oxobutanoate + NADPH + H(+). Its pathway is amino-acid biosynthesis; L-isoleucine biosynthesis; L-isoleucine from 2-oxobutanoate: step 2/4. It functions in the pathway amino-acid biosynthesis; L-valine biosynthesis; L-valine from pyruvate: step 2/4. Involved in the biosynthesis of branched-chain amino acids (BCAA). Catalyzes an alkyl-migration followed by a ketol-acid reduction of (S)-2-acetolactate (S2AL) to yield (R)-2,3-dihydroxy-isovalerate. In the isomerase reaction, S2AL is rearranged via a Mg-dependent methyl migration to produce 3-hydroxy-3-methyl-2-ketobutyrate (HMKB). In the reductase reaction, this 2-ketoacid undergoes a metal-dependent reduction by NADPH to yield (R)-2,3-dihydroxy-isovalerate. This Campylobacter jejuni (strain RM1221) protein is Ketol-acid reductoisomerase (NADP(+)).